The primary structure comprises 477 residues: MVTATATATNVGYITQVIGPVIDAEFPSGKLPEIYNALKVEGTTESGLKVNVTFEVQQLLGDNRVRAVAMSSTDGLVRGMPVVDTGAPITVPVGQPTLGRIFNVLGEPVDQGEPVQAQEFAPIHRSAPPLVDLTIKPEPFETGIKVIDLLAPFKKGGKVGLFGGAGVGKTVLIQELIHNIAEEHSGLSVFAGVGERTREGNDLYNEMKESGVLDKVALVYGQMNEPPGARMRVGLTALTMAEYFRDVNKQDVLLFIDNIFRFVQAGSEVSALLGRMPSAVGYQPTLATEMGNLQERITSTKQGSITSVQAVYVPADDLTDPAPATTFAHLDSTVVLSRSLAAKGIYPAVDPLDSSSTILQADIVGEEHYNTARAVKQTLQRYKELQDIIAILGLDELSEEDKLVVARARRIERFLSQPFFVAEVFTGSPGKYVKLADTIKGFQRILSGELDNLPEQAFYLVGTIEEAIEKAEKLKSK.

Residue 163–170 (GGAGVGKT) coordinates ATP.

This sequence belongs to the ATPase alpha/beta chains family. F-type ATPases have 2 components, CF(1) - the catalytic core - and CF(0) - the membrane proton channel. CF(1) has five subunits: alpha(3), beta(3), gamma(1), delta(1), epsilon(1). CF(0) has four main subunits: a(1), b(1), b'(1) and c(9-12).

It is found in the cellular thylakoid membrane. The catalysed reaction is ATP + H2O + 4 H(+)(in) = ADP + phosphate + 5 H(+)(out). In terms of biological role, produces ATP from ADP in the presence of a proton gradient across the membrane. The catalytic sites are hosted primarily by the beta subunits. This chain is ATP synthase subunit beta, found in Synechococcus sp. (strain JA-2-3B'a(2-13)) (Cyanobacteria bacterium Yellowstone B-Prime).